Here is a 623-residue protein sequence, read N- to C-terminus: E3 ubiquitin-protein ligase DTX1 (623 aa).

WWE domains follow at residues 13 to 93 and 94 to 170; these read HNFG…PVRR and NFFE…RLRR. The segment at 224–319 is disordered; sequence KVPSGPPPAL…RASIPPGVPA (96 aa). A compositionally biased stretch (pro residues) spans 227–242; sequence SGPPPALPPPPPPPIH. Polar residues predominate over residues 292-311; that stretch reads GQNNLNRPGEQRTSGSSSRA. An RING-type zinc finger spans residues 413 to 474; the sequence is CTICMERLVT…DGSLQCPTCK (62 aa).

It belongs to the Deltex family. As to quaternary structure, may form a homo- or heterodimer with other members of the Deltex family. Probably interacts with Notch1. Specifically expressed in regions undergoing neuronal differentiation. Mainly colocalizes with Notch1.

The enzyme catalyses S-ubiquitinyl-[E2 ubiquitin-conjugating enzyme]-L-cysteine + [acceptor protein]-L-lysine = [E2 ubiquitin-conjugating enzyme]-L-cysteine + N(6)-ubiquitinyl-[acceptor protein]-L-lysine.. Its pathway is protein modification; protein ubiquitination. In terms of biological role, regulator of Notch signaling, a signaling pathway involved in cell-cell communications that regulates a broad spectrum of cell-fate determinations. Probably acts both as a positive and negative regulator of Notch, depending on the developmental and cell context. Functions as a ubiquitin ligase protein in vivo, mediating ubiquitination and promoting degradation of MEKK1, suggesting that it may regulate the Notch pathway via some ubiquitin ligase activity. The protein is E3 ubiquitin-protein ligase DTX1 (dtx1) of Xenopus laevis (African clawed frog).